A 122-amino-acid chain; its full sequence is Large ribosomal subunit protein uL14 (122 aa).

It belongs to the universal ribosomal protein uL14 family. As to quaternary structure, part of the 50S ribosomal subunit. Forms a cluster with proteins L3 and L19. In the 70S ribosome, L14 and L19 interact and together make contacts with the 16S rRNA in bridges B5 and B8.

In terms of biological role, binds to 23S rRNA. Forms part of two intersubunit bridges in the 70S ribosome. In Polaromonas naphthalenivorans (strain CJ2), this protein is Large ribosomal subunit protein uL14.